Here is a 232-residue protein sequence, read N- to C-terminus: MAKKTKRALAIREKLEAGKVYTALEALQLLKEMPAAKFVESVDVAINLGVDPRKSDQVVRGAAVLPHGTGKTVRVAVFAQNDNADAAKAAGADIVGMEELADEIKAGRSDFDVVIAEPAAMRVVGQLGQILGPRGLMPNPKVGTVTADIKAAVENAKAGQVRFRADKSGIVHAMIGKIDFDAEKLLENLHALIAEINKLRPTTIKGVYMQKAYISTTMGPGIAVDVASLTNA.

This sequence belongs to the universal ribosomal protein uL1 family. As to quaternary structure, part of the 50S ribosomal subunit.

Its function is as follows. Binds directly to 23S rRNA. The L1 stalk is quite mobile in the ribosome, and is involved in E site tRNA release. In terms of biological role, protein L1 is also a translational repressor protein, it controls the translation of the L11 operon by binding to its mRNA. This Dichelobacter nodosus (strain VCS1703A) protein is Large ribosomal subunit protein uL1.